We begin with the raw amino-acid sequence, 131 residues long: Phosphoribosyl-AMP cyclohydrolase (131 aa).

Aspartate 78 is a binding site for Mg(2+). Zn(2+) is bound at residue cysteine 79. Mg(2+) is bound by residues aspartate 80 and aspartate 82. Zn(2+) contacts are provided by cysteine 96 and cysteine 103.

It belongs to the PRA-CH family. Homodimer. Mg(2+) is required as a cofactor. It depends on Zn(2+) as a cofactor.

The protein localises to the cytoplasm. The catalysed reaction is 1-(5-phospho-beta-D-ribosyl)-5'-AMP + H2O = 1-(5-phospho-beta-D-ribosyl)-5-[(5-phospho-beta-D-ribosylamino)methylideneamino]imidazole-4-carboxamide. It participates in amino-acid biosynthesis; L-histidine biosynthesis; L-histidine from 5-phospho-alpha-D-ribose 1-diphosphate: step 3/9. Its function is as follows. Catalyzes the hydrolysis of the adenine ring of phosphoribosyl-AMP. The sequence is that of Phosphoribosyl-AMP cyclohydrolase from Neisseria meningitidis serogroup C / serotype 2a (strain ATCC 700532 / DSM 15464 / FAM18).